We begin with the raw amino-acid sequence, 1383 residues long: Cell surface hyaluronidase (1383 aa).

A disordered region spans residues 1 to 76 (MYAAGSRGHS…QRTPSESRKR (76 aa)). The Cytoplasmic segment spans residues 1-82 (MYAAGSRGHS…SRKRKRHKNT (82 aa)). Residues serine 10, serine 53, and serine 63 each carry the phosphoserine modification. A helical; Signal-anchor for type II membrane protein transmembrane segment spans residues 83–103 (FICFAITSFSFFVALAVILGI). At 104–1383 (SSKYAPDENC…DLLQQALKVL (1280 aa)) the chain is on the extracellular side. Residues 121–245 (RNWDPGQDSA…QRTSWTMLAR (125 aa)) form the G8 domain. One can recognise a GG-type lectin 1 domain in the interval 255 to 412 (GSYAFEKDFS…ISLSGFRVDI (158 aa)). Asparagine 292 is a glycosylation site (N-linked (GlcNAc...) asparagine). PbH1 repeat units lie at residues 669–691 (HPNNHLINNAAAGSQDAGIWYLF), 711–733 (TPLGIFYNNRVHSNFKAGLFVDK), and 791–812 (GGDIIVQNSAFADNGKGLTFAS). N-linked (GlcNAc...) asparagine glycosylation is found at asparagine 914 and asparagine 1234. The 159-residue stretch at 1208–1366 (KSYLPVRFQS…MEEYGCSRTG (159 aa)) folds into the GG-type lectin 2 domain.

It belongs to the CEMIP family. Ca(2+) serves as cofactor. In terms of tissue distribution, widely expressed. Strongly expressed in endothelial cells in the subcapsular sinus of lymph nodes and in the liver sinusoid, two primary sites implicated in systemic hyaluronan turnover.

It localises to the cell membrane. The catalysed reaction is Random hydrolysis of (1-&gt;4)-linkages between N-acetyl-beta-D-glucosamine and D-glucuronate residues in hyaluronate.. Functionally, cell surface hyaluronidase that mediates the initial cleavage of extracellular high-molecular-weight hyaluronan into intermediate-size hyaluronan of approximately 5 kDa fragments. Very specific to hyaluronan; not able to cleave chondroitin sulfate or dermatan sulfate. Has an essential function in systemic hyaluronan catabolism and turnover and regulates cell adhesion and migration via hyaluronan degradation at focal adhesion sites. Acts as a regulator of angiogenesis and heart morphogenesis by mediating degradation of extracellular hyaluronan, thereby regulating VEGF signaling. This is Cell surface hyaluronidase from Mus musculus (Mouse).